Here is a 51-residue protein sequence, read N- to C-terminus: Insulin-1 (51 aa).

Intrachain disulfides connect C8/C37, C20/C50, and C36/C41.

This sequence belongs to the insulin family. Heterodimer of a B chain and an A chain linked by two disulfide bonds.

The protein localises to the secreted. Insulin decreases blood glucose concentration. It increases cell permeability to monosaccharides, amino acids and fatty acids. It accelerates glycolysis, the pentose phosphate cycle, and glycogen synthesis in liver. The polypeptide is Insulin-1 (ins1) (Batrachoididae sp. (Toadfish)).